Reading from the N-terminus, the 243-residue chain is UPF0173 metal-dependent hydrolase Caur_2542 (243 aa).

Belongs to the UPF0173 family.

The polypeptide is UPF0173 metal-dependent hydrolase Caur_2542 (Chloroflexus aurantiacus (strain ATCC 29366 / DSM 635 / J-10-fl)).